A 112-amino-acid polypeptide reads, in one-letter code: Ferredoxin-2 (112 aa).

2 consecutive 4Fe-4S ferredoxin-type domains span residues Thr-2 to Glu-30 and Asn-31 to Glu-60. Cys-9 and Cys-17 together coordinate [3Fe-4S] cluster. Positions 21, 40, 43, and 46 each coordinate [4Fe-4S] cluster. Residue Cys-50 coordinates [3Fe-4S] cluster. The segment covering Asp-85–Tyr-103 has biased composition (basic and acidic residues). The segment at Asp-85–Asp-112 is disordered.

It depends on [4Fe-4S] cluster as a cofactor. The cofactor is [3Fe-4S] cluster.

In terms of biological role, ferredoxins are iron-sulfur proteins that transfer electrons in a wide variety of metabolic reactions. This is Ferredoxin-2 (fdxA) from Rhodobacter capsulatus (strain ATCC BAA-309 / NBRC 16581 / SB1003).